A 367-amino-acid polypeptide reads, in one-letter code: Chorismate synthase (367 aa).

An NADP(+)-binding site is contributed by arginine 48. FMN-binding positions include arginine 125–serine 127, glycine 290, lysine 305–serine 309, and arginine 333.

The protein belongs to the chorismate synthase family. In terms of assembly, homotetramer. The cofactor is FMNH2.

It catalyses the reaction 5-O-(1-carboxyvinyl)-3-phosphoshikimate = chorismate + phosphate. The protein operates within metabolic intermediate biosynthesis; chorismate biosynthesis; chorismate from D-erythrose 4-phosphate and phosphoenolpyruvate: step 7/7. In terms of biological role, catalyzes the anti-1,4-elimination of the C-3 phosphate and the C-6 proR hydrogen from 5-enolpyruvylshikimate-3-phosphate (EPSP) to yield chorismate, which is the branch point compound that serves as the starting substrate for the three terminal pathways of aromatic amino acid biosynthesis. This reaction introduces a second double bond into the aromatic ring system. This chain is Chorismate synthase, found in Protochlamydia amoebophila (strain UWE25).